Reading from the N-terminus, the 1381-residue chain is Hepatocyte growth factor receptor (1381 aa).

Positions 1 to 24 are cleaved as a signal peptide; sequence MKAPAVLAPGILVLLFTLVQKSDG. Topologically, residues 25-934 are extracellular; the sequence is ECKEALVKSE…VQPDQNFTGL (910 aa). In terms of domain architecture, Sema spans 27–515; sequence KEALVKSEMN…TGKKITKIPL (489 aa). Asn-45 is a glycosylation site (N-linked (GlcNAc...) asparagine). 4 disulfide bridges follow: Cys-95–Cys-101, Cys-98–Cys-160, Cys-133–Cys-141, and Cys-172–Cys-175. Asn-106 carries N-linked (GlcNAc...) asparagine glycosylation. N-linked (GlcNAc...) asparagine glycosylation is found at Asn-202 and Asn-358. Intrachain disulfides connect Cys-298-Cys-363 and Cys-385-Cys-397. N-linked (GlcNAc...) asparagine glycans are attached at residues Asn-399, Asn-405, and Asn-449. 4 cysteine pairs are disulfide-bonded: Cys-520–Cys-538, Cys-526–Cys-561, Cys-529–Cys-545, and Cys-541–Cys-551. N-linked (GlcNAc...) asparagine glycosylation is present at Asn-553. IPT/TIG domains are found at residues 563 to 655, 657 to 739, and 742 to 836; these read PTIY…FSYV, PIIT…FSYR, and PIVY…LIYV. O-linked (Man) threonine glycosylation is present at Thr-582. N-linked (GlcNAc...) asparagine glycosylation is found at Asn-607 and Asn-635. Residues Thr-676 and Thr-761 are each glycosylated (O-linked (Man) threonine). N-linked (GlcNAc...) asparagine glycans are attached at residues Asn-785, Asn-879, and Asn-930. The chain crosses the membrane as a helical span at residues 935–955; sequence IVGVVSISIILLLLLGLFLWL. Topologically, residues 956 to 1381 are cytoplasmic; the sequence is KRRKQIKDLG…QDNVDGEVDT (426 aa). Ser-966 carries the phosphoserine modification. At Thr-977 the chain carries Phosphothreonine. Phosphoserine is present on residues Ser-990, Ser-997, and Ser-1000. Residue Tyr-1003 is modified to Phosphotyrosine. Residues 1078 to 1345 form the Protein kinase domain; sequence VHFNEVIGRG…RISAIFSTFI (268 aa). ATP-binding positions include 1084–1092 and Lys-1110; that span reads IGRGHFGCV. The Proton acceptor role is filled by Asp-1204. Positions 1212–1381 are interaction with RANBP9; it reads LDEKFTVKVA…QDNVDGEVDT (170 aa). At Tyr-1230 the chain carries Phosphotyrosine. Residues Tyr-1234 and Tyr-1235 each carry the phosphotyrosine; by autocatalysis modification. Position 1289 is a phosphothreonine (Thr-1289). The interaction with MUC20 stretch occupies residues 1320–1359; the sequence is WHPKAELRPSFSELVSRISAIFSTFIGEHYVHVNATYVNV. Tyr-1349 and Tyr-1356 each carry phosphotyrosine; by autocatalysis. Tyr-1365 is subject to Phosphotyrosine.

The protein belongs to the protein kinase superfamily. Tyr protein kinase family. As to quaternary structure, heterodimer made of an alpha chain (50 kDa) and a beta chain (145 kDa) which are disulfide linked. Binds PLXNB1. Interacts when phosphorylated with downstream effectors including STAT3, PIK3R1, SRC, PCLG1, GRB2 and GAB1. Interacts with SPSB1, SPSB2 and SPSB4. Interacts with INPP5D/SHIP1. When phosphorylated at Tyr-1356, interacts with INPPL1/SHIP2. Interacts with RANBP9 and RANBP10, as well as SPSB1, SPSB2, SPSB3 and SPSB4. SPSB1 binding occurs in the presence and in the absence of HGF, however HGF treatment has a positive effect on this interaction. Interacts with MUC20; prevents interaction with GRB2 and suppresses hepatocyte growth factor-induced cell proliferation. Interacts with GRB10. Interacts with PTPN1 and PTPN2. Interacts with HSP90AA1 and HSP90AB1; the interaction suppresses MET kinase activity. Interacts with tensin TNS3. Interacts (when phosphorylated) with tensin TNS4 (via SH2 domain); the interaction increases MET protein stability by inhibiting MET endocytosis and subsequent lysosomal degradation. In terms of processing, autophosphorylated in response to ligand binding on Tyr-1234 and Tyr-1235 in the kinase domain leading to further phosphorylation of Tyr-1349 and Tyr-1356 in the C-terminal multifunctional docking site. Dephosphorylated by PTPRJ at Tyr-1349 and Tyr-1365. Dephosphorylated by PTPN1 and PTPN2. Ubiquitinated. Ubiquitination by CBL regulates the receptor stability and activity through proteasomal degradation. Post-translationally, O-mannosylation of IPT/TIG domains by TMEM260 is required for protein maturation. O-mannosylated residues are composed of single mannose glycans that are not elongated or modified.

It localises to the membrane. The enzyme catalyses L-tyrosyl-[protein] + ATP = O-phospho-L-tyrosyl-[protein] + ADP + H(+). Its activity is regulated as follows. In its inactive state, the C-terminal tail interacts with the catalytic domain and inhibits the kinase activity. Upon ligand binding, the C-terminal tail is displaced and becomes phosphorylated, thus increasing the kinase activity. Its function is as follows. Receptor tyrosine kinase that transduces signals from the extracellular matrix into the cytoplasm by binding to hepatocyte growth factor/HGF ligand. Regulates many physiological processes including proliferation, scattering, morphogenesis and survival. Ligand binding at the cell surface induces autophosphorylation of MET on its intracellular domain that provides docking sites for downstream signaling molecules. Following activation by ligand, interacts with the PI3-kinase subunit PIK3R1, PLCG1, SRC, GRB2, STAT3 or the adapter GAB1. Recruitment of these downstream effectors by MET leads to the activation of several signaling cascades including the RAS-ERK, PI3 kinase-AKT, or PLCgamma-PKC. The RAS-ERK activation is associated with the morphogenetic effects while PI3K/AKT coordinates prosurvival effects. During embryonic development, MET signaling plays a role in gastrulation, development and migration of muscles and neuronal precursors, angiogenesis and kidney formation. In adults, participates in wound healing as well as organ regeneration and tissue remodeling. Also promotes differentiation and proliferation of hematopoietic cells. This is Hepatocyte growth factor receptor (MET) from Equus caballus (Horse).